Here is a 490-residue protein sequence, read N- to C-terminus: MANKPRTRWVLPYKTKNVEDNYFLGQVLGQGQFGTTFLCTHKQTGQKLACKSIPKRKLLCQEDYDDVLREIQIMHHLSEYPNVVRIESAYEDTKNVHLVMELCEGGELFDRIVKRGHYSEREAAKLIKTIVGVVEACHSLGVVHRDLKPENFLFSSSDEDASLKSTDFGLSVFCTPGEAFSELVGSAYYVAPEVLHKHYGPECDVWSAGVILYILLCGFPPFWAESEIGIFRKILQGKLEFEINPWPSISESAKDLIKKMLESNPKKRLTAHQVLCHPWIVDDKVAPDKPLDCAVVSRLKKFSAMNKLKKMALRVIAERLSEEEIGGLKELFKMIDTDKSGTITFEELKDSMRRVGSELMESEIQELLRAADVDESGTIDYGEFLAATIHLNKLEREENLVAAFSFFDKDASGYITIEELQQAWKEFGINDSNLDEMIKDIDQDNDGQIDYGEFVAMMRKGNGTGGGIGRRTMRNSLNFGTTLPDESMNV.

The Protein kinase domain occupies 22–280; the sequence is YFLGQVLGQG…AHQVLCHPWI (259 aa). Residues 28–36 and K51 each bind ATP; that span reads LGQGQFGTT. D146 serves as the catalytic Proton acceptor. S186 carries the phosphoserine modification. The tract at residues 286-316 is autoinhibitory domain; that stretch reads APDKPLDCAVVSRLKKFSAMNKLKKMALRVI. EF-hand domains lie at 323 to 358, 359 to 394, 395 to 430, and 434 to 464; these read EEIG…VGSE, LMES…LNKL, EREE…FGIN, and LDEM…GNGT. Positions 336, 338, 340, 342, 347, 372, 374, 376, 378, 383, 408, 410, 412, 414, 419, 442, 444, 446, 448, and 453 each coordinate Ca(2+).

This sequence belongs to the protein kinase superfamily. Ser/Thr protein kinase family. CDPK subfamily. As to quaternary structure, interacts weakly with DI19. As to expression, ubiquitously expressed.

The enzyme catalyses L-seryl-[protein] + ATP = O-phospho-L-seryl-[protein] + ADP + H(+). The catalysed reaction is L-threonyl-[protein] + ATP = O-phospho-L-threonyl-[protein] + ADP + H(+). With respect to regulation, activated by calcium. Autophosphorylation may play an important role in the regulation of the kinase activity. May play a role in signal transduction pathways that involve calcium as a second messenger. In Arabidopsis thaliana (Mouse-ear cress), this protein is Calcium-dependent protein kinase 12 (CPK12).